Reading from the N-terminus, the 351-residue chain is Holliday junction branch migration complex subunit RuvB (351 aa).

Residues 1 to 182 are large ATPase domain (RuvB-L); the sequence is MNDRLITPDA…FGIVQRLEYY (182 aa). ATP-binding positions include Ile21, Arg22, Gly63, Lys66, Thr67, Thr68, 129–131, Arg172, Tyr182, and Arg219; that span reads EDF. Thr67 is a Mg(2+) binding site. Residues 183–253 form a small ATPAse domain (RuvB-S) region; sequence NVADLSGIVK…VAHAAMELLN (71 aa). Positions 256 to 351 are head domain (RuvB-H); sequence RNGFDEQDRR…QDAPPVGRER (96 aa). DNA-binding residues include Arg292, Arg311, and Arg316. Residues 328–351 are disordered; that stretch reads LNPPRQPDTSPDLFQDAPPVGRER.

It belongs to the RuvB family. Homohexamer. Forms an RuvA(8)-RuvB(12)-Holliday junction (HJ) complex. HJ DNA is sandwiched between 2 RuvA tetramers; dsDNA enters through RuvA and exits via RuvB. An RuvB hexamer assembles on each DNA strand where it exits the tetramer. Each RuvB hexamer is contacted by two RuvA subunits (via domain III) on 2 adjacent RuvB subunits; this complex drives branch migration. In the full resolvosome a probable DNA-RuvA(4)-RuvB(12)-RuvC(2) complex forms which resolves the HJ.

The protein localises to the cytoplasm. The catalysed reaction is ATP + H2O = ADP + phosphate + H(+). The RuvA-RuvB-RuvC complex processes Holliday junction (HJ) DNA during genetic recombination and DNA repair, while the RuvA-RuvB complex plays an important role in the rescue of blocked DNA replication forks via replication fork reversal (RFR). RuvA specifically binds to HJ cruciform DNA, conferring on it an open structure. The RuvB hexamer acts as an ATP-dependent pump, pulling dsDNA into and through the RuvAB complex. RuvB forms 2 homohexamers on either side of HJ DNA bound by 1 or 2 RuvA tetramers; 4 subunits per hexamer contact DNA at a time. Coordinated motions by a converter formed by DNA-disengaged RuvB subunits stimulates ATP hydrolysis and nucleotide exchange. Immobilization of the converter enables RuvB to convert the ATP-contained energy into a lever motion, pulling 2 nucleotides of DNA out of the RuvA tetramer per ATP hydrolyzed, thus driving DNA branch migration. The RuvB motors rotate together with the DNA substrate, which together with the progressing nucleotide cycle form the mechanistic basis for DNA recombination by continuous HJ branch migration. Branch migration allows RuvC to scan DNA until it finds its consensus sequence, where it cleaves and resolves cruciform DNA. The protein is Holliday junction branch migration complex subunit RuvB of Alkalilimnicola ehrlichii (strain ATCC BAA-1101 / DSM 17681 / MLHE-1).